Reading from the N-terminus, the 186-residue chain is ATP synthase subunit delta (186 aa).

It belongs to the ATPase delta chain family. In terms of assembly, F-type ATPases have 2 components, F(1) - the catalytic core - and F(0) - the membrane proton channel. F(1) has five subunits: alpha(3), beta(3), gamma(1), delta(1), epsilon(1). F(0) has three main subunits: a(1), b(2) and c(10-14). The alpha and beta chains form an alternating ring which encloses part of the gamma chain. F(1) is attached to F(0) by a central stalk formed by the gamma and epsilon chains, while a peripheral stalk is formed by the delta and b chains.

The protein resides in the cell membrane. In terms of biological role, f(1)F(0) ATP synthase produces ATP from ADP in the presence of a proton or sodium gradient. F-type ATPases consist of two structural domains, F(1) containing the extramembraneous catalytic core and F(0) containing the membrane proton channel, linked together by a central stalk and a peripheral stalk. During catalysis, ATP synthesis in the catalytic domain of F(1) is coupled via a rotary mechanism of the central stalk subunits to proton translocation. Functionally, this protein is part of the stalk that links CF(0) to CF(1). It either transmits conformational changes from CF(0) to CF(1) or is implicated in proton conduction. This chain is ATP synthase subunit delta, found in Symbiobacterium thermophilum (strain DSM 24528 / JCM 14929 / IAM 14863 / T).